The primary structure comprises 266 residues: Glucosamine-6-phosphate deaminase (266 aa).

Residue aspartate 72 is the Proton acceptor; for enolization step of the active site. Catalysis depends on aspartate 141, which acts as the For ring-opening step. The Proton acceptor; for ring-opening step role is filled by histidine 143. Glutamate 148 functions as the For ring-opening step in the catalytic mechanism.

The protein belongs to the glucosamine/galactosamine-6-phosphate isomerase family. NagB subfamily. Homohexamer.

It catalyses the reaction alpha-D-glucosamine 6-phosphate + H2O = beta-D-fructose 6-phosphate + NH4(+). It participates in amino-sugar metabolism; N-acetylneuraminate degradation; D-fructose 6-phosphate from N-acetylneuraminate: step 5/5. Its activity is regulated as follows. Allosterically activated by N-acetylglucosamine 6-phosphate (GlcNAc6P). Catalyzes the reversible isomerization-deamination of glucosamine 6-phosphate (GlcN6P) to form fructose 6-phosphate (Fru6P) and ammonium ion. This Pectobacterium atrosepticum (strain SCRI 1043 / ATCC BAA-672) (Erwinia carotovora subsp. atroseptica) protein is Glucosamine-6-phosphate deaminase.